Here is a 434-residue protein sequence, read N- to C-terminus: Arginine/serine-rich coiled-coil protein 2 (434 aa).

Residues 1-27 (MAASDTERDGLAPEKTSPDRDKKKEQS) are compositionally biased toward basic and acidic residues. The segment at 1-230 (MAASDTERDG…PSPPPFRGRN (230 aa)) is disordered. The residue at position 2 (Ala-2) is an N-acetylalanine. Ser-4 is modified (phosphoserine). A phosphothreonine mark is found at Thr-6 and Thr-16. 3 positions are modified to phosphoserine: Ser-17, Ser-30, and Ser-32. The segment covering 35–51 (ASKHHYSRSRSRSRERK) has biased composition (basic residues). Positions 66 to 111 (RSKEGRRHESKDKSSKKHKSEEHNDKEHSSDKGRERLNSSENGEDR) are enriched in basic and acidic residues. At Ser-104 the chain carries Phosphoserine. The segment covering 112–214 (HKRKERKSSR…KRIEKPRRFS (103 aa)) has biased composition (basic residues). Residues 230–270 (NTAMDAQEALARRLERAKKLQEQREKEMVEKQKQQEIAAAA) adopt a coiled-coil conformation. Lys-375 participates in a covalent cross-link: Glycyl lysine isopeptide (Lys-Gly) (interchain with G-Cter in SUMO1); alternate. Lys-375 is covalently cross-linked (Glycyl lysine isopeptide (Lys-Gly) (interchain with G-Cter in SUMO2); alternate). Ser-376 is modified (phosphoserine).

Belongs to the RSRC2 family.

This chain is Arginine/serine-rich coiled-coil protein 2 (RSRC2), found in Homo sapiens (Human).